The sequence spans 298 residues: MLIDPIELYRYPEKWIKDRDAEKKVRSGLYILTEDGYLRRGITTGTTASAAAVAAIASLKEKVEKVKVSTPAGVDVEVEVEAEKGFARVRKFSGDHEFDVTNGIIFEAEVCETSGIFFGRGVGVKAGEKAVSRSAKLQILENFIKASREFNFSGGVRISVPDGEEVAKKTGNEKVGIKGGISILGTTGFVEPWCKKLVETKLKIAMQYHRIAITTGRKAWLYARKKFPEYQPFVFGVHIDEALKHPGEKIIVGFPGLLKIWAGSRDRIEERAREEGVRVVVIEDDMDSWVWDVQGTDH.

It belongs to the CbiD family.

It carries out the reaction Co-precorrin-5B + S-adenosyl-L-methionine = Co-precorrin-6A + S-adenosyl-L-homocysteine. It functions in the pathway cofactor biosynthesis; adenosylcobalamin biosynthesis; cob(II)yrinate a,c-diamide from sirohydrochlorin (anaerobic route): step 6/10. Its function is as follows. Catalyzes the methylation of C-1 in cobalt-precorrin-5B to form cobalt-precorrin-6A. This Archaeoglobus fulgidus (strain ATCC 49558 / DSM 4304 / JCM 9628 / NBRC 100126 / VC-16) protein is Cobalt-precorrin-5B C(1)-methyltransferase.